The following is a 288-amino-acid chain: Eukaryotic translation initiation factor 3 subunit G (288 aa).

Disordered stretches follow at residues 1 to 33 (MSKLGNRADWADDEEFDDPSALPPQQITTNKDG) and 156 to 197 (DEPT…GGER). One can recognise an RRM domain in the interval 208–286 (ATLRVTNVSE…LILRVEFAKR (79 aa)).

Belongs to the eIF-3 subunit G family. Component of the eukaryotic translation initiation factor 3 (eIF-3) complex.

It localises to the cytoplasm. RNA-binding component of the eukaryotic translation initiation factor 3 (eIF-3) complex, which is involved in protein synthesis of a specialized repertoire of mRNAs and, together with other initiation factors, stimulates binding of mRNA and methionyl-tRNAi to the 40S ribosome. The eIF-3 complex specifically targets and initiates translation of a subset of mRNAs involved in cell proliferation. This subunit can bind 18S rRNA. The polypeptide is Eukaryotic translation initiation factor 3 subunit G (tif35) (Aspergillus niger (strain ATCC MYA-4892 / CBS 513.88 / FGSC A1513)).